Consider the following 250-residue polypeptide: 1-(5-phosphoribosyl)-5-[(5-phosphoribosylamino)methylideneamino] imidazole-4-carboxamide isomerase (250 aa).

The active-site Proton acceptor is Asp-8. Residue Asp-129 is the Proton donor of the active site.

This sequence belongs to the HisA/HisF family.

It is found in the cytoplasm. It catalyses the reaction 1-(5-phospho-beta-D-ribosyl)-5-[(5-phospho-beta-D-ribosylamino)methylideneamino]imidazole-4-carboxamide = 5-[(5-phospho-1-deoxy-D-ribulos-1-ylimino)methylamino]-1-(5-phospho-beta-D-ribosyl)imidazole-4-carboxamide. It functions in the pathway amino-acid biosynthesis; L-histidine biosynthesis; L-histidine from 5-phospho-alpha-D-ribose 1-diphosphate: step 4/9. The sequence is that of 1-(5-phosphoribosyl)-5-[(5-phosphoribosylamino)methylideneamino] imidazole-4-carboxamide isomerase from Desulfatibacillum aliphaticivorans.